Consider the following 550-residue polypeptide: Iduronate 2-sulfatase (550 aa).

A signal peptide spans 1-25 (MPPPRTGRGLLWLGLVLSSVCVALG). A propeptide spanning residues 26-33 (SETQANST) is cleaved from the precursor. 3 residues coordinate Ca(2+): aspartate 45, aspartate 46, and cysteine 84. Cysteine 84 serves as the catalytic Nucleophile. Position 84 is a 3-oxoalanine (Cys) (cysteine 84). Residue asparagine 115 is glycosylated (N-linked (GlcNAc...) asparagine). Histidine 138 is a catalytic residue. Asparagine 144 carries N-linked (GlcNAc...) asparagine glycosylation. A disulfide bridge links cysteine 171 with cysteine 184. Residues asparagine 246, asparagine 280, and asparagine 325 are each glycosylated (N-linked (GlcNAc...) asparagine). Ca(2+) contacts are provided by aspartate 334 and histidine 335. A disulfide bridge connects residues cysteine 422 and cysteine 432. N-linked (GlcNAc...) asparagine glycans are attached at residues asparagine 513 and asparagine 537.

Belongs to the sulfatase family. In terms of assembly, monomer. The 58-kDa mature form is composed of two chains resulting from proteolitic processing, the 42-kDa chain and the 14-kDa chain that remain stably associated and form the 58-kDa intermediate form which is enzymatically active. Ca(2+) is required as a cofactor. Synthesized as a 75-kDa precursor form in the endoplasmic reticulum (ER), and then processed by proteolytic cleavage through various intermediates to yield a 55-kDa mature form, with the release of an 18 kDa polypeptide. In terms of processing, the conversion to 3-oxoalanine (also known as C-formylglycine, FGly), of a serine or cysteine residue in prokaryotes and of a cysteine residue in eukaryotes, is critical for catalytic activity. As to expression, liver, kidney, lung, and placenta.

Its subcellular location is the lysosome. It carries out the reaction Hydrolysis of the 2-sulfate groups of the L-iduronate 2-sulfate units of dermatan sulfate, heparan sulfate and heparin.. In terms of biological role, lysosomal enzyme involved in the degradation pathway of dermatan sulfate and heparan sulfate. The sequence is that of Iduronate 2-sulfatase (IDS) from Homo sapiens (Human).